We begin with the raw amino-acid sequence, 366 residues long: IgG receptor FcRn large subunit p51 (366 aa).

The first 22 residues, 1 to 22, serve as a signal peptide directing secretion; it reads MGMSQPGVLLSLLLVLLPQTWG. The interval 23 to 111 is alpha-1; the sequence is AEPRLPLMYH…RTLENQINGT (89 aa). The Extracellular portion of the chain corresponds to 23–298; the sequence is AEPRLPLMYH…VDLDSPARSS (276 aa). N-linked (GlcNAc...) asparagine glycosylation is found at Asn109, Asn126, Asn150, and Asn247. The segment at 112–201 is alpha-2; that stretch reads FTLQGLLGCE…ERGRQNLEWK (90 aa). Intrachain disulfides connect Cys120–Cys183 and Cys222–Cys276. Positions 202–291 are alpha-3; it reads EPPSMRLKAR…GLAQPLTVDL (90 aa). One can recognise an Ig-like C1-type domain in the interval 203–290; sequence PPSMRLKARP…EGLAQPLTVD (88 aa). Residues 293–298 are connecting peptide; it reads SPARSS. A helical transmembrane segment spans residues 299 to 322; sequence VPVVGIILGLLLVVVAIAGGVLLW. The Cytoplasmic portion of the chain corresponds to 323-366; sequence NRMRSGLPAPWLSLSGDDSGDLLPGGNLPPEAEPQGVNAFPATS. Ser335 carries the post-translational modification Phosphoserine. The interval 344–366 is disordered; sequence LLPGGNLPPEAEPQGVNAFPATS.

Belongs to the immunoglobulin superfamily. In terms of assembly, fcRn complex consists of two subunits: p51, and p14 which is equivalent to beta-2-microglobulin. It forms an MHC class I-like heterodimer. Interacts with albumin/ALB; this interaction regulates ALB homeostasis. In terms of tissue distribution, intestinal epithelium.

It is found in the cell membrane. It localises to the endosome membrane. Its function is as follows. Cell surface receptor that transfers passive humoral immunity from the mother to the newborn. Binds to the Fc region of monomeric immunoglobulin gamma and mediates its selective uptake from milk. IgG in the milk is bound at the apical surface of the intestinal epithelium. The resultant FcRn-IgG complexes are transcytosed across the intestinal epithelium and IgG is released from FcRn into blood or tissue fluids. Throughout life, contributes to effective humoral immunity by recycling IgG and extending its half-life in the circulation. Mechanistically, monomeric IgG binding to FcRn in acidic endosomes of endothelial and hematopoietic cells recycles IgG to the cell surface where it is released into the circulation. In addition of IgG, regulates homeostasis of the other most abundant circulating protein albumin/ALB. The polypeptide is IgG receptor FcRn large subunit p51 (Fcgrt) (Rattus norvegicus (Rat)).